The following is a 282-amino-acid chain: tRNA pseudouridine synthase B (282 aa).

The active-site Nucleophile is Asp39.

Belongs to the pseudouridine synthase TruB family. Type 1 subfamily.

The enzyme catalyses uridine(55) in tRNA = pseudouridine(55) in tRNA. Functionally, responsible for synthesis of pseudouridine from uracil-55 in the psi GC loop of transfer RNAs. The chain is tRNA pseudouridine synthase B from Borreliella afzelii (strain PKo) (Borrelia afzelii).